Reading from the N-terminus, the 105-residue chain is Dicamba O-demethylase, ferredoxin component (105 aa).

In terms of domain architecture, 2Fe-2S ferredoxin-type spans 2-105; it reads PQITVVNQSG…GIKVTIAQED (104 aa). [2Fe-2S] cluster-binding residues include Cys-40, Cys-46, Cys-49, and Cys-86.

The protein belongs to the adrenodoxin/putidaredoxin family. As to quaternary structure, monomer. The dicamba O-demethylase multicomponent enzyme system is composed of an oxygenase component (DdmC) and an electron transfer component formed by a ferredoxin reductase (DdmA1) and a ferredoxin (DdmB). In vitro, dicamba O-demethylase assays in which DdmA2 is substituted for DdmA1 demonstrate that the two enzymes possess nearly identical activities. Requires [2Fe-2S] cluster as cofactor.

Functionally, component of the dicamba O-demethylase multicomponent enzyme system involved in the degradation of the herbicide dicamba. In vitro, functions as an intermediate electron transfer protein. In Stenotrophomonas maltophilia (Pseudomonas maltophilia), this protein is Dicamba O-demethylase, ferredoxin component.